A 306-amino-acid chain; its full sequence is Porphobilinogen deaminase (306 aa).

C239 is modified (S-(dipyrrolylmethanemethyl)cysteine).

This sequence belongs to the HMBS family. As to quaternary structure, monomer. Dipyrromethane serves as cofactor.

The catalysed reaction is 4 porphobilinogen + H2O = hydroxymethylbilane + 4 NH4(+). Its pathway is porphyrin-containing compound metabolism; protoporphyrin-IX biosynthesis; coproporphyrinogen-III from 5-aminolevulinate: step 2/4. In terms of biological role, tetrapolymerization of the monopyrrole PBG into the hydroxymethylbilane pre-uroporphyrinogen in several discrete steps. The protein is Porphobilinogen deaminase (hemC) of Helicobacter pylori (strain ATCC 700392 / 26695) (Campylobacter pylori).